We begin with the raw amino-acid sequence, 284 residues long: Homeobox protein Hox-D13 (284 aa).

Positions 217 to 276 (GRKKRVPYTKTQLKELEREYATNKFITKEKRRRISTATNLTERQVTIWFQNRRVKEKKVV) form a DNA-binding region, homeobox.

This sequence belongs to the Abd-B homeobox family.

It is found in the nucleus. Its function is as follows. Sequence-specific transcription factor that binds gene promoters and activates their transcription. Part of a developmental regulatory system that provides cells with specific positional identities on the anterior-posterior axis. The chain is Homeobox protein Hox-D13 (HOXD13) from Heterodontus francisci (Horn shark).